Here is a 389-residue protein sequence, read N- to C-terminus: Protein IQ-domain 26 (389 aa).

2 IQ domains span residues 106-134 (ERWA…GLVK) and 135-157 (LQAL…SMQA). The tract at residues 137–151 (ALVRGYLVRKRAAET) is calmodulin-binding. The tract at residues 347 to 374 (SVSGVRMVQPQPQPQTQTQQQKRSPCSY) is disordered.

Belongs to the IQD family. Binds to multiple calmodulin (CaM) in the presence of Ca(2+) and CaM-like proteins.

It localises to the cell membrane. Its subcellular location is the cytoplasm. The protein localises to the cytoskeleton. Functionally, may be involved in cooperative interactions with calmodulins or calmodulin-like proteins. Recruits calmodulin proteins to microtubules, thus being a potential scaffold in cellular signaling and trafficking. May associate with nucleic acids and regulate gene expression at the transcriptional or post-transcriptional level. The protein is Protein IQ-domain 26 of Arabidopsis thaliana (Mouse-ear cress).